The primary structure comprises 561 residues: BTB/POZ domain-containing protein At2g46260 (561 aa).

2 disordered regions span residues 1–31 and 100–119; these read MRGS…EGDF and LTDN…NLDD. Residues 17–28 show a composition bias toward polar residues; it reads DSNFSRHGSSSE. Positions 107-119 are enriched in acidic residues; that stretch reads DMDDAPGGDNLDD. The 70-residue stretch at 143-212 folds into the BTB domain; that stretch reads IDCSTVVRVK…MYSNSLSVTT (70 aa). Positions 266-358 constitute a BACK domain; it reads QPLTDAAKQF…YMTCRKLKKV (93 aa).

The protein operates within protein modification; protein ubiquitination. Functionally, may act as a substrate-specific adapter of an E3 ubiquitin-protein ligase complex (CUL3-RBX1-BTB) which mediates the ubiquitination and subsequent proteasomal degradation of target proteins. In Arabidopsis thaliana (Mouse-ear cress), this protein is BTB/POZ domain-containing protein At2g46260.